The following is a 289-amino-acid chain: Protease HtpX homolog (289 aa).

A run of 2 helical transmembrane segments spans residues 11-31 (AALF…IGAG) and 36-54 (APIW…YGYW). A Zn(2+)-binding site is contributed by His-138. The active site involves Glu-139. Residue His-142 coordinates Zn(2+). The next 2 helical transmembrane spans lie at 153–173 (VAAA…FFGG) and 182–202 (LAMI…QMAI). Glu-207 contributes to the Zn(2+) binding site.

It belongs to the peptidase M48B family. Zn(2+) serves as cofactor.

The protein resides in the cell membrane. This Pseudarthrobacter chlorophenolicus (strain ATCC 700700 / DSM 12829 / CIP 107037 / JCM 12360 / KCTC 9906 / NCIMB 13794 / A6) (Arthrobacter chlorophenolicus) protein is Protease HtpX homolog.